Reading from the N-terminus, the 335-residue chain is Glycerol-3-phosphate dehydrogenase [NAD(P)+] (335 aa).

Ser12, Trp13, Arg33, Arg34, and Lys107 together coordinate NADPH. Sn-glycerol 3-phosphate contacts are provided by Lys107, Gly134, and Ser136. Ala138 contacts NADPH. Residues Lys189, Asp242, Ser252, Arg253, and Asn254 each contribute to the sn-glycerol 3-phosphate site. Lys189 serves as the catalytic Proton acceptor. Arg253 contributes to the NADPH binding site. NADPH-binding residues include Val277 and Glu279.

This sequence belongs to the NAD-dependent glycerol-3-phosphate dehydrogenase family.

Its subcellular location is the cytoplasm. It catalyses the reaction sn-glycerol 3-phosphate + NAD(+) = dihydroxyacetone phosphate + NADH + H(+). The enzyme catalyses sn-glycerol 3-phosphate + NADP(+) = dihydroxyacetone phosphate + NADPH + H(+). The protein operates within membrane lipid metabolism; glycerophospholipid metabolism. In terms of biological role, catalyzes the reduction of the glycolytic intermediate dihydroxyacetone phosphate (DHAP) to sn-glycerol 3-phosphate (G3P), the key precursor for phospholipid synthesis. In Moorella thermoacetica (strain ATCC 39073 / JCM 9320), this protein is Glycerol-3-phosphate dehydrogenase [NAD(P)+].